A 283-amino-acid chain; its full sequence is Formamidopyrimidine-DNA glycosylase (283 aa).

The active-site Schiff-base intermediate with DNA is P2. Catalysis depends on E3, which acts as the Proton donor. The active-site Proton donor; for beta-elimination activity is the K58. Residues H100, R119, and R162 each coordinate DNA. An FPG-type zinc finger spans residues 247–283; that stretch reads RVYGREGLPCVTPGCSGTVGRIVQSGRSSFHCPLCQR. R273 acts as the Proton donor; for delta-elimination activity in catalysis.

It belongs to the FPG family. In terms of assembly, monomer. Zn(2+) is required as a cofactor.

It catalyses the reaction Hydrolysis of DNA containing ring-opened 7-methylguanine residues, releasing 2,6-diamino-4-hydroxy-5-(N-methyl)formamidopyrimidine.. The catalysed reaction is 2'-deoxyribonucleotide-(2'-deoxyribose 5'-phosphate)-2'-deoxyribonucleotide-DNA = a 3'-end 2'-deoxyribonucleotide-(2,3-dehydro-2,3-deoxyribose 5'-phosphate)-DNA + a 5'-end 5'-phospho-2'-deoxyribonucleoside-DNA + H(+). Its function is as follows. Involved in base excision repair of DNA damaged by oxidation or by mutagenic agents. Acts as a DNA glycosylase that recognizes and removes damaged bases. Has a preference for oxidized purines, such as 7,8-dihydro-8-oxoguanine (8-oxoG). Has AP (apurinic/apyrimidinic) lyase activity and introduces nicks in the DNA strand. Cleaves the DNA backbone by beta-delta elimination to generate a single-strand break at the site of the removed base with both 3'- and 5'-phosphates. This is Formamidopyrimidine-DNA glycosylase from Cereibacter sphaeroides (strain ATCC 17029 / ATH 2.4.9) (Rhodobacter sphaeroides).